A 566-amino-acid polypeptide reads, in one-letter code: OTU domain-containing protein 5 (566 aa).

Disordered stretches follow at residues 1 to 117 (MTIL…GDAL) and 145 to 175 (GPGH…GAGY). Residues 11–30 (PPDADPANEPPPPGPLPPAP) show a composition bias toward pro residues. Gly residues predominate over residues 34–47 (AGVGVGGGGTGVGG). A compositionally biased stretch (pro residues) spans 63–75 (ASPPPQGPLPGPP). At S64 the chain carries Phosphoserine. Positions 84 to 97 (AVPPGAVAGPRPQQ) are enriched in low complexity. The span at 105–115 (GPGGPGGGPGD) shows a compositional bias: gly residues. The residue at position 165 (S165) is a Phosphoserine. Y175 carries the post-translational modification Phosphotyrosine. S177 is subject to Phosphoserine. Position 195 is a phosphothreonine (T195). One can recognise an OTU domain in the interval 213-336 (FIIKQMKEDG…NIHYNSVVNP (124 aa)). Residues 218–224 (MKEDGAC) are cys-loop. D221 is an active-site residue. C224 acts as the Nucleophile in catalysis. The tract at residues 273–283 (KRKNNCHGNHI) is variable-loop. Phosphoserine is present on S323. A his-loop region spans residues 324–329 (YHRNIH). H329 is a catalytic residue. A phosphoserine mark is found at S332 and S370. The disordered stretch occupies residues 413-499 (ARQVRGPSQP…TSSQFSAGGD (87 aa)). Composition is skewed to low complexity over residues 425-438 (ASAT…AASS) and 445-457 (SRSP…ASSP). Residue S447 is modified to Phosphoserine. Residue T502 is modified to Phosphothreonine. S503 carries the post-translational modification Phosphoserine.

The protein belongs to the peptidase C85 family. As to quaternary structure, interacts with TRAF3. In terms of processing, phosphorylation at Ser-177 is required for deubiquitinating activity. Phosphorylation at Ser-323, Ser-332 and Ser-503 by MTOR promotes its activity.

It localises to the nucleus. The catalysed reaction is Thiol-dependent hydrolysis of ester, thioester, amide, peptide and isopeptide bonds formed by the C-terminal Gly of ubiquitin (a 76-residue protein attached to proteins as an intracellular targeting signal).. With respect to regulation, inhibited by N-ethyl-maleimide (NEM). Deubiquitinating enzyme that functions as a negative regulator of the innate immune system. Has peptidase activity towards 'Lys-48'- and 'Lys-63'-linked polyubiquitin chains. Can also cleave 'Lys-11'-linked ubiquitin chains (in vitro). Acts via TRAF3 deubiquitination and subsequent suppression of type I interferon (IFN) production. Controls neuroectodermal differentiation through cleaving 'Lys-48'-linked ubiquitin chains to counteract degradation of select chromatin regulators such as ARID1A, HDAC2 and HCF1. Acts as a positive regulator of mTORC1 and mTORC2 signaling following phosphorylation by MTOR: acts by mediating deubiquitination of BTRC, leading to its stability. The sequence is that of OTU domain-containing protein 5 from Mus musculus (Mouse).